The chain runs to 263 residues: Acetylglutamate kinase (263 aa).

Substrate contacts are provided by residues 49–50, Arg-71, and Asn-163; that span reads GG.

Belongs to the acetylglutamate kinase family. ArgB subfamily.

Its subcellular location is the cytoplasm. It catalyses the reaction N-acetyl-L-glutamate + ATP = N-acetyl-L-glutamyl 5-phosphate + ADP. It participates in amino-acid biosynthesis; L-arginine biosynthesis; N(2)-acetyl-L-ornithine from L-glutamate: step 2/4. Functionally, catalyzes the ATP-dependent phosphorylation of N-acetyl-L-glutamate. This chain is Acetylglutamate kinase, found in Moritella abyssi.